A 245-amino-acid polypeptide reads, in one-letter code: Phosphoribosylaminoimidazole-succinocarboxamide synthase (245 aa).

The protein belongs to the SAICAR synthetase family.

It carries out the reaction 5-amino-1-(5-phospho-D-ribosyl)imidazole-4-carboxylate + L-aspartate + ATP = (2S)-2-[5-amino-1-(5-phospho-beta-D-ribosyl)imidazole-4-carboxamido]succinate + ADP + phosphate + 2 H(+). It participates in purine metabolism; IMP biosynthesis via de novo pathway; 5-amino-1-(5-phospho-D-ribosyl)imidazole-4-carboxamide from 5-amino-1-(5-phospho-D-ribosyl)imidazole-4-carboxylate: step 1/2. In Acaryochloris marina (strain MBIC 11017), this protein is Phosphoribosylaminoimidazole-succinocarboxamide synthase.